We begin with the raw amino-acid sequence, 201 residues long: Molybdenum cofactor guanylyltransferase (201 aa).

GTP contacts are provided by residues 15 to 17, Lys-28, Asp-74, and Asp-104; that span reads LCG. Mg(2+) is bound at residue Asp-104.

Belongs to the MobA family. As to quaternary structure, monomer. It depends on Mg(2+) as a cofactor.

The protein resides in the cytoplasm. The enzyme catalyses Mo-molybdopterin + GTP + H(+) = Mo-molybdopterin guanine dinucleotide + diphosphate. Functionally, transfers a GMP moiety from GTP to Mo-molybdopterin (Mo-MPT) cofactor (Moco or molybdenum cofactor) to form Mo-molybdopterin guanine dinucleotide (Mo-MGD) cofactor. The polypeptide is Molybdenum cofactor guanylyltransferase (Ectopseudomonas mendocina (strain ymp) (Pseudomonas mendocina)).